Reading from the N-terminus, the 518-residue chain is Cytochrome P450 monooxygenase atnE (518 aa).

Residues 11-31 form a helical membrane-spanning segment; the sequence is FLAAFAVWMGVVVLAFAIFCV. Residue Asn-184 is glycosylated (N-linked (GlcNAc...) asparagine). Position 458 (Cys-458) interacts with heme.

The protein belongs to the cytochrome P450 family. Requires heme as cofactor.

It localises to the membrane. It participates in secondary metabolite biosynthesis. Cytochrome P450 monooxygenase; part of the gene cluster that mediates the biosynthesis of aspercryptins, linear lipopeptides built from six amino acids including 2 highly unusual and nonproteogenic amino acids, 2-amino-octanoic acid (2aoa) and 2-amino-dodecanol (2adol). The core structure of aspercryptins is as follows: Ser/Ala-Thr-Ile/Val-2aoa-Asn-2adol. The first step of aspercryptin biosynthesis is the generation of the fatty acid precursors, octanoic and dodecanoic acids, by the FAS subunits atnF and atnM. The fatty acid precursors are likely transformed into the corresponding alpha-amino fatty acids in three steps. First, they are hydroxylated by the cytochrome P450 monooxygenase atnE, then oxidized to the corresponding alpha-keto acids by the NAD(P)-dependent oxidoreductase atnD, and finally converted to the alpha-amino fatty acids by the PLP-dependent aminotransferases atnH or atnJ. the alpha-amino fatty acids, 2-amino-octanoic and 2-amino-dodecanoic acids, are recognized, activated, and covalently tethered to the NRPS atnA by its fourth and sixth adenylation domains. The second module of atnA is the Thr module and contains an epimerase (E) domain responsible for the epimerization of Thr to D-allo-Thr. Additionally, despite atnA having only one epimerase domain, the first amino acid of aspercryptin A1 is D-Ser, suggesting that serine is either loaded directly as D-Ser on the first module or that the epimerase domain in the threonine module epimerizes both L-Ser and L-Thr. After condensation of the hexapeptide of aspercryptin, the C-terminal reductase (TE) domain might be involved in the reductive release and production of the aldehyde hexapeptide. Further reduction would generate aspercryptins. The variety of aspercryptins produced reflects the flexibility of the atnA NRPS, allowing incorporation of alanine instead of serine, valine for isoleucine, and a C10 fatty amino alcohol instead of the C12 version. AtnB seems to be involved in the selectivity for Ile versus Val by the third module. Moreover, type B, C and D aspercryptins have an additional N-terminal cichorine, acetyl and propionyl group respectively. This is Cytochrome P450 monooxygenase atnE from Emericella nidulans (strain FGSC A4 / ATCC 38163 / CBS 112.46 / NRRL 194 / M139) (Aspergillus nidulans).